We begin with the raw amino-acid sequence, 75 residues long: Bacteriocin lactococcin-A (75 aa).

Positions 1-21 (MKNQLNFNIVSDEELSEANGG) are excised as a propeptide. A helical transmembrane segment spans residues 30–52 (AAGDLYYNTNTHKYVYQQTQNAF).

Its subcellular location is the secreted. It localises to the host cell membrane. Functionally, kills Lactococci. The chain is Bacteriocin lactococcin-A (lcnA) from Lactococcus lactis subsp. cremoris (Streptococcus cremoris).